Consider the following 161-residue polypeptide: Large ribosomal subunit protein uL29c (161 aa).

The transit peptide at 1-61 (MATMSLAAAS…ERRAAAMVAM (61 aa)) directs the protein to the chloroplast.

It belongs to the universal ribosomal protein uL29 family. As to quaternary structure, part of the 50S ribosomal subunit.

Its subcellular location is the plastid. The protein localises to the chloroplast. This Zea mays (Maize) protein is Large ribosomal subunit protein uL29c (RPL29).